We begin with the raw amino-acid sequence, 586 residues long: Aspartate--tRNA(Asp/Asn) ligase (586 aa).

Glu-172 provides a ligand contact to L-aspartate. Residues 196–199 (QLYK) form an aspartate region. Arg-218 serves as a coordination point for L-aspartate. ATP is bound by residues 218 to 220 (RDE) and Gln-227. His-446 is an L-aspartate binding site. Glu-480 lines the ATP pocket. An L-aspartate-binding site is contributed by Arg-487. An ATP-binding site is contributed by 532 to 535 (GIDR).

This sequence belongs to the class-II aminoacyl-tRNA synthetase family. Type 1 subfamily. Homodimer.

The protein resides in the cytoplasm. It catalyses the reaction tRNA(Asx) + L-aspartate + ATP = L-aspartyl-tRNA(Asx) + AMP + diphosphate. In terms of biological role, aspartyl-tRNA synthetase with relaxed tRNA specificity since it is able to aspartylate not only its cognate tRNA(Asp) but also tRNA(Asn). Reaction proceeds in two steps: L-aspartate is first activated by ATP to form Asp-AMP and then transferred to the acceptor end of tRNA(Asp/Asn). The chain is Aspartate--tRNA(Asp/Asn) ligase from Borreliella burgdorferi (strain ATCC 35210 / DSM 4680 / CIP 102532 / B31) (Borrelia burgdorferi).